Here is a 151-residue protein sequence, read N- to C-terminus: Small ribosomal subunit protein uS15 (151 aa).

The segment at 1–20 is disordered; that stretch reads MARLHSGKRGSSGSTKPLRT.

It belongs to the universal ribosomal protein uS15 family. Part of the 30S ribosomal subunit.

The protein is Small ribosomal subunit protein uS15 of Methanococcus vannielii (strain ATCC 35089 / DSM 1224 / JCM 13029 / OCM 148 / SB).